The primary structure comprises 512 residues: ATP synthase subunit alpha 1 (512 aa).

169–176 lines the ATP pocket; sequence GDRQTGKT.

This sequence belongs to the ATPase alpha/beta chains family. In terms of assembly, F-type ATPases have 2 components, CF(1) - the catalytic core - and CF(0) - the membrane proton channel. CF(1) has five subunits: alpha(3), beta(3), gamma(1), delta(1), epsilon(1). CF(0) has four main subunits: a(1), b(1), b'(1) and c(9-12).

Its subcellular location is the cell inner membrane. It carries out the reaction ATP + H2O + 4 H(+)(in) = ADP + phosphate + 5 H(+)(out). Functionally, produces ATP from ADP in the presence of a proton gradient across the membrane. The alpha chain is a regulatory subunit. The polypeptide is ATP synthase subunit alpha 1 (Cereibacter sphaeroides (strain ATCC 17029 / ATH 2.4.9) (Rhodobacter sphaeroides)).